A 269-amino-acid chain; its full sequence is Glutamate racemase (269 aa).

Residues D7–S8 and Y39–G40 each bind substrate. The active-site Proton donor/acceptor is C70. Residue N71–T72 participates in substrate binding. C194 acts as the Proton donor/acceptor in catalysis. T195–H196 provides a ligand contact to substrate.

Belongs to the aspartate/glutamate racemases family.

It catalyses the reaction L-glutamate = D-glutamate. It participates in cell wall biogenesis; peptidoglycan biosynthesis. Functionally, provides the (R)-glutamate required for cell wall biosynthesis. This chain is Glutamate racemase, found in Ruegeria sp. (strain TM1040) (Silicibacter sp.).